We begin with the raw amino-acid sequence, 92 residues long: Neurophysin 2 (92 aa).

7 disulfides stabilise this stretch: C10-C54, C13-C27, C21-C44, C28-C34, C61-C73, C67-C85, and C74-C79.

It belongs to the vasopressin/oxytocin family. There is an equilibrium between the monomeric and dimeric forms. On peptide binding the dimeric form predominates. A shorter neurophysin molecule (1-90) also exists and is probably derived from the complete protein by proteolytic degradation (in vivo or after extraction).

Its subcellular location is the secreted. Its function is as follows. Neurophysin 2 specifically binds vasopressin. The chain is Neurophysin 2 (AVP) from Loxodonta africana (African elephant).